Reading from the N-terminus, the 2115-residue chain is Non-reducing polyketide synthase ascC (2115 aa).

The interval 1 to 21 (MTLIQTKHSASAAVFSPQSTA) is disordered. An N-terminal acylcarrier protein transacylase domain (SAT) region spans residues 14-260 (VFSPQSTAPK…HNSRNTELAQ (247 aa)). A Ketosynthase family 3 (KS3) domain is found at 381 to 805 (PDSIAIVGSA…GSNSALICSE (425 aa)). Active-site for beta-ketoacyl synthase activity residues include cysteine 553, histidine 689, and histidine 728. A malonyl-CoA:ACP transacylase (MAT) domain region spans residues 908–1210 (LTFSGQSRTT…ANPSAHTFQA (303 aa)). Serine 995 serves as the catalytic For acyl/malonyl transferase activity. Residues 1280 to 1406 (PKKVQQLVTL…GDFFATSGEM (127 aa)) are N-terminal hotdog fold. In terms of domain architecture, PKS/mFAS DH spans 1280–1581 (PKKVQQLVTL…FMRIKAAKLE (302 aa)). The interval 1285–1580 (QLVTLKKTEG…QFMRIKAAKL (296 aa)) is product template (PT) domain. Histidine 1315 serves as the catalytic Proton acceptor; for dehydratase activity. The segment at 1428 to 1581 (DAERLRTATA…FMRIKAAKLE (154 aa)) is C-terminal hotdog fold. The Proton donor; for dehydratase activity role is filled by aspartate 1492. The tract at residues 1587–1624 (ANPGSKTKSTNGNALPSVPRSVPAGPTSAPQQVAPTTM) is disordered. Polar residues predominate over residues 1588 to 1600 (NPGSKTKSTNGNA). Residues 1640 to 1724 (PSKIADLKSL…PTAALTEGLV (85 aa)) form the Carrier domain. An O-(pantetheine 4'-phosphoryl)serine modification is found at serine 1674. Over residues 1734–1748 (SDSIRNSTGFHTTIP) the composition is skewed to polar residues. The disordered stretch occupies residues 1734–1767 (SDSIRNSTGFHTTIPATPAELHSNPPDSLDGSTV). Positions 1777-2107 (ARFKLDTMVY…YDFLLGELEN (331 aa)) are thioesterase (TE) domain. Catalysis depends on for thioesterase activity residues serine 1897 and aspartate 2045.

It catalyses the reaction 3 malonyl-CoA + acetyl-CoA + 2 H(+) = orsellinate + 3 CO2 + 4 CoA. It functions in the pathway secondary metabolite biosynthesis; terpenoid biosynthesis. Functionally, non-reducing polyketide synthase; part of the asc-1 gene cluster that mediates the biosynthesis of both ascochlorin and ascofuranone, a strong inhibitor of cyanide-insensitive alternative oxidases and a promising drug candidate against African trypanosomiasis. The first step in the pathway is performed by the non-reducing polyketide synthase ascC that produces orsellinic acid by condensing acetyl-CoA with 3 malonyl-CoA units. Orsellinic acid is then prenylated by the prenyltransferase ascA to yield ilicicolinic acid B. Ilicicolinic acid B is further reduced to ilicicolin B by the reductase ascB. The halogenase ascD then chlorinates ilicicolin B to produce ilicicolin A which is converted to ilicicolin A epoxide by the cytochrome P450 monooxygenase ascE that catalyzes stereoselective epoxidation of the terminal double bond of the prenyl group. Ilicicolin A epoxide is the last common precursor for the biosynthesis of ascofuranone and ascochlorin. The terpene cyclase ascF produces a monocyclic terpene, and the cyclization reaction is proposed to be initiated by protonation of the terminal epoxide of ilicicolin A epoxide to generate a monocyclic tertiarycation, which is followed by a series of hydride and methyl shifts with abstraction of proton, leading to the formation of the (14S,15R,19R)-trimethylcyclohexanone ring structure of ilicicolin C, which is finally reduced to ascochlorin by the dehydrogenase ascG. On the other hand, ilicicolin A epoxide is hydroxylated by the cytochrome P450 monooxygenase ascH, and the resultant product is cyclized by the terpene cyclase ascI to ascofuranol via protonation-initiated epoxide ring opening, which facilitates the 6-endo-tet cyclization to form the tetrahy-drofuran ring. Finally, ascofuranol is oxidized into ascofuranone by ascJ. The sequence is that of Non-reducing polyketide synthase ascC from Acremonium egyptiacum (Oospora egyptiaca).